The sequence spans 295 residues: MTNQIQKTISVCIIGRPNSGKSTLLNRIIGEKLSIVTPKVQTTRSIITGIVTLKDTQIILYDTPGIFEPKGMLEKAMVRCAWSSVYSADLVLSIIDSLKPLDNIAHNILNQFCLLNIVPIFLLNKIDIESKYLNDIKAFLKITHPKSLLFPISALLGKNVDVLLEYIKSKAKVSPWLYADDDITNLPMRFIAAEITREQLFLNLQQELPYKLTVQTEKFEELKDKSIKINQVIVISRENYKAIILGKNGAKIKDIGVKSRVQLEQFFCVPVHLFLFVKVHAFWENNQEFYQYMKI.

The Era-type G domain maps to 7 to 176; it reads KTISVCIIGR…IKSKAKVSPW (170 aa). A G1 region spans residues 15 to 22; the sequence is GRPNSGKS. 15 to 22 serves as a coordination point for GTP; the sequence is GRPNSGKS. The segment at 41 to 45 is G2; that stretch reads QTTRS. Residues 62-65 form a G3 region; it reads DTPG. GTP is bound by residues 62 to 66 and 124 to 127; these read DTPGI and NKID. Residues 124–127 form a G4 region; it reads NKID. The interval 152 to 154 is G5; the sequence is ISA. The region spanning 204-281 is the KH type-2 domain; it reads LQQELPYKLT…HLFLFVKVHA (78 aa).

This sequence belongs to the TRAFAC class TrmE-Era-EngA-EngB-Septin-like GTPase superfamily. Era GTPase family. In terms of assembly, monomer.

Its subcellular location is the cytoplasm. It localises to the cell inner membrane. An essential GTPase that binds both GDP and GTP, with rapid nucleotide exchange. Plays a role in 16S rRNA processing and 30S ribosomal subunit biogenesis and possibly also in cell cycle regulation and energy metabolism. This chain is GTPase Era, found in Rickettsia prowazekii (strain Madrid E).